A 72-amino-acid chain; its full sequence is Large ribosomal subunit protein bL31 (72 aa).

Cysteine 16, cysteine 18, cysteine 38, and cysteine 41 together coordinate Zn(2+).

It belongs to the bacterial ribosomal protein bL31 family. Type A subfamily. As to quaternary structure, part of the 50S ribosomal subunit. It depends on Zn(2+) as a cofactor.

In terms of biological role, binds the 23S rRNA. This chain is Large ribosomal subunit protein bL31, found in Aliivibrio salmonicida (strain LFI1238) (Vibrio salmonicida (strain LFI1238)).